The sequence spans 237 residues: Purine nucleoside phosphorylase DeoD-type (237 aa).

Residue His-4 participates in a purine D-ribonucleoside binding. Residues Gly-20, Arg-24, Arg-43, and 87–90 contribute to the phosphate site; that span reads RVGT. A purine D-ribonucleoside is bound by residues 179–181 and 203–204; these read EME and SD. The active-site Proton donor is Asp-204.

The protein belongs to the PNP/UDP phosphorylase family. Homohexamer; trimer of homodimers.

The catalysed reaction is a purine D-ribonucleoside + phosphate = a purine nucleobase + alpha-D-ribose 1-phosphate. The enzyme catalyses a purine 2'-deoxy-D-ribonucleoside + phosphate = a purine nucleobase + 2-deoxy-alpha-D-ribose 1-phosphate. Catalyzes the reversible phosphorolytic breakdown of the N-glycosidic bond in the beta-(deoxy)ribonucleoside molecules, with the formation of the corresponding free purine bases and pentose-1-phosphate. This chain is Purine nucleoside phosphorylase DeoD-type, found in Streptococcus gordonii (strain Challis / ATCC 35105 / BCRC 15272 / CH1 / DL1 / V288).